A 172-amino-acid chain; its full sequence is Small ribosomal subunit protein uS5 (172 aa).

Residues 16-79 (LKEKLVHINR…EDGKKNVIKV (64 aa)) form the S5 DRBM domain.

This sequence belongs to the universal ribosomal protein uS5 family. Part of the 30S ribosomal subunit. Contacts proteins S4 and S8.

Functionally, with S4 and S12 plays an important role in translational accuracy. Located at the back of the 30S subunit body where it stabilizes the conformation of the head with respect to the body. This is Small ribosomal subunit protein uS5 from Pelodictyon phaeoclathratiforme (strain DSM 5477 / BU-1).